The following is a 79-amino-acid chain: Kunitz-type serine protease inhibitor homolog dendrotoxin K (79 aa).

A BPTI/Kunitz inhibitor domain is found at 27–77 (CKLPLRIGPCKRKIPSFYYKWKAKQCLPFDYSGCGGNANRFKTIEECRRTC). 3 disulfide bridges follow: Cys-27/Cys-77, Cys-36/Cys-60, and Cys-52/Cys-73.

The protein belongs to the venom Kunitz-type family. Expressed by the venom gland.

Its subcellular location is the secreted. Serine protease inhibitor homolog that selectively blocks voltage-gated potassium channels homooligomer Kv1.1/KCNA1 (EC(50)=0.6 nM) and Kv1.1-containing heterooligomer. This Dendroaspis polylepis polylepis (Black mamba) protein is Kunitz-type serine protease inhibitor homolog dendrotoxin K.